A 371-amino-acid polypeptide reads, in one-letter code: Carbamoyl phosphate synthase small chain (371 aa).

Residues 1–190 (MRKTAILALE…LYRENEKPLV (190 aa)) form a CPSase region. Residues Ser47, Gly237, and Gly239 each contribute to the L-glutamine site. The Glutamine amidotransferase type-1 domain occupies 189–371 (LVAVIDFGVK…FKEFVKMAQG (183 aa)). The Nucleophile role is filled by Cys264. L-glutamine is bound by residues Leu265, Gln268, Asn306, and Phe309. Active-site residues include His348 and Glu350.

It belongs to the CarA family. Composed of two chains; the small (or glutamine) chain promotes the hydrolysis of glutamine to ammonia, which is used by the large (or ammonia) chain to synthesize carbamoyl phosphate. Tetramer of heterodimers (alpha,beta)4.

It carries out the reaction hydrogencarbonate + L-glutamine + 2 ATP + H2O = carbamoyl phosphate + L-glutamate + 2 ADP + phosphate + 2 H(+). It catalyses the reaction L-glutamine + H2O = L-glutamate + NH4(+). It functions in the pathway amino-acid biosynthesis; L-arginine biosynthesis; carbamoyl phosphate from bicarbonate: step 1/1. The protein operates within pyrimidine metabolism; UMP biosynthesis via de novo pathway; (S)-dihydroorotate from bicarbonate: step 1/3. In terms of biological role, small subunit of the glutamine-dependent carbamoyl phosphate synthetase (CPSase). CPSase catalyzes the formation of carbamoyl phosphate from the ammonia moiety of glutamine, carbonate, and phosphate donated by ATP, constituting the first step of 2 biosynthetic pathways, one leading to arginine and/or urea and the other to pyrimidine nucleotides. The small subunit (glutamine amidotransferase) binds and cleaves glutamine to supply the large subunit with the substrate ammonia. This Aquifex aeolicus (strain VF5) protein is Carbamoyl phosphate synthase small chain.